A 159-amino-acid chain; its full sequence is 2-C-methyl-D-erythritol 2,4-cyclodiphosphate synthase (159 aa).

Aspartate 10 and histidine 12 together coordinate a divalent metal cation. 4-CDP-2-C-methyl-D-erythritol 2-phosphate is bound by residues 10–12 (DVH) and 37–38 (HS). Histidine 45 provides a ligand contact to a divalent metal cation. 4-CDP-2-C-methyl-D-erythritol 2-phosphate-binding positions include 59–61 (DIG), 64–68 (FLDTD), 103–109 (AQAPKML), 135–138 (TTTE), phenylalanine 142, and arginine 145.

The protein belongs to the IspF family. As to quaternary structure, homotrimer. It depends on a divalent metal cation as a cofactor.

It catalyses the reaction 4-CDP-2-C-methyl-D-erythritol 2-phosphate = 2-C-methyl-D-erythritol 2,4-cyclic diphosphate + CMP. The protein operates within isoprenoid biosynthesis; isopentenyl diphosphate biosynthesis via DXP pathway; isopentenyl diphosphate from 1-deoxy-D-xylulose 5-phosphate: step 4/6. Its function is as follows. Involved in the biosynthesis of isopentenyl diphosphate (IPP) and dimethylallyl diphosphate (DMAPP), two major building blocks of isoprenoid compounds. Catalyzes the conversion of 4-diphosphocytidyl-2-C-methyl-D-erythritol 2-phosphate (CDP-ME2P) to 2-C-methyl-D-erythritol 2,4-cyclodiphosphate (ME-CPP) with a corresponding release of cytidine 5-monophosphate (CMP). The polypeptide is 2-C-methyl-D-erythritol 2,4-cyclodiphosphate synthase (Francisella tularensis subsp. holarctica (strain FTNF002-00 / FTA)).